A 313-amino-acid polypeptide reads, in one-letter code: Mas-related G-protein coupled receptor member A4 (313 aa).

The Extracellular segment spans residues 1–25 (MAPTTTNPMNETIPGSIDIETLIPN). N-linked (GlcNAc...) asparagine glycosylation is present at Asn10. Residues 26 to 46 (LMIIIFGLVGLTGNVILFWLL) form a helical membrane-spanning segment. Over 47–54 (GFHLHRNA) the chain is Cytoplasmic. A helical membrane pass occupies residues 55 to 75 (FLVYILNLALADFLFLLCHII). A glycan (N-linked (GlcNAc...) asparagine) is linked at Asn76. Residues 76 to 93 (NSTMLLLKVHLPNNILNH) lie on the Extracellular side of the membrane. A helical membrane pass occupies residues 94–114 (CFDIIMTVLYITGLSMLSAIS). Residues 115 to 137 (TERCLSVLCPIWYRCRRPEHTST) lie on the Cytoplasmic side of the membrane. A helical membrane pass occupies residues 138 to 158 (VLCAVIWFLPLLICILNGYFC). Residues 159-182 (HFFGPKYVIDSVCLATNFFIRTYP) lie on the Extracellular side of the membrane. A helical membrane pass occupies residues 183–203 (MFLFIVLCLSTLALLARLFCG). At 204–219 (AGKTKFTRLFVTIMLT) the chain is on the cytoplasmic side. Residues 220–240 (VLVFLLCGLPLGFFWFLVPWI) traverse the membrane as a helical segment. The Extracellular segment spans residues 241–255 (NRDFSVLDYILFQTS). Residues 256–276 (LVLTSVNSCANPIIYFFVGSF) traverse the membrane as a helical segment. Topologically, residues 277–313 (RHRLKHKTLKMVLQSALQDTPETPENMVEMSRSKAEP) are cytoplasmic.

It belongs to the G-protein coupled receptor 1 family. Mas subfamily. Expressed in a subset of sensory neurons that includes nociceptors. Expressed in the subclass of non-peptidergic sensory neurons that are IB4(+) and VR1(-).

Its subcellular location is the cell membrane. In terms of biological role, orphan receptor. May be a receptor for RFamide-family neuropeptides such as NPFF and NPAF, which are analgesic in vivo. May regulate nociceptor function and/or development, including the sensation or modulation of pain. This is Mas-related G-protein coupled receptor member A4 (Mrgpra4) from Mus musculus (Mouse).